The chain runs to 401 residues: SVP1-like protein 2 (401 aa).

2 WD repeats span residues 222–262 (AHKN…LIHE) and 267–306 (LDRA…DKRH).

It belongs to the WD repeat PROPPIN family.

It is found in the vacuole membrane. The protein resides in the cytoplasmic vesicle membrane. Involved in mitochondrial or peroxisomal functions and amino acid signaling pathways. In Eremothecium gossypii (strain ATCC 10895 / CBS 109.51 / FGSC 9923 / NRRL Y-1056) (Yeast), this protein is SVP1-like protein 2 (HSV2).